The chain runs to 208 residues: Cysteine-rich protein 2 (208 aa).

The LIM zinc-binding 1 domain maps to 5–57 (CPKCDKTVCFAEKVSSLGKDWHKFCLKCERCSKTLTPGGHAEHDGKPFCHKPC). The residue at position 23 (lysine 23) is an N6-acetyllysine. The disordered stretch occupies residues 98–119 (AEERKASGPPKGPSRASSVTTF). The residue at position 104 (serine 104) is a Phosphoserine. The LIM zinc-binding 2 domain maps to 126-178 (CPRCSKKVYFAEKVTSLGKDWHRPCLHCERCGKTLTPGGHAEHDGQPYCHKPC). Residues lysine 138 and lysine 144 each carry the N6-acetyllysine modification.

As to quaternary structure, interacts with TGFB1I1.

The protein is Cysteine-rich protein 2 (CRIP2) of Pongo abelii (Sumatran orangutan).